Consider the following 196-residue polypeptide: Ribosome maturation factor RimM (196 aa).

A PRC barrel domain is found at 118 to 196 (QGEYYWRDLI…EMTVDWDPDF (79 aa)).

It belongs to the RimM family. As to quaternary structure, binds ribosomal protein uS19.

It localises to the cytoplasm. Its function is as follows. An accessory protein needed during the final step in the assembly of 30S ribosomal subunit, possibly for assembly of the head region. Essential for efficient processing of 16S rRNA. May be needed both before and after RbfA during the maturation of 16S rRNA. It has affinity for free ribosomal 30S subunits but not for 70S ribosomes. In Alcanivorax borkumensis (strain ATCC 700651 / DSM 11573 / NCIMB 13689 / SK2), this protein is Ribosome maturation factor RimM.